Consider the following 596-residue polypeptide: NADH-quinone oxidoreductase subunit C/D (596 aa).

Residues 1–186 are NADH dehydrogenase I subunit C; that stretch reads MVDIMCNDST…NPFILTKQKE (186 aa). Positions 210–596 are NADH dehydrogenase I subunit D; that stretch reads NFMFLNLGPN…IDFVMSDVDR (387 aa).

In the N-terminal section; belongs to the complex I 30 kDa subunit family. This sequence in the C-terminal section; belongs to the complex I 49 kDa subunit family. NDH-1 is composed of 13 different subunits. Subunits NuoB, CD, E, F, and G constitute the peripheral sector of the complex.

It is found in the cell inner membrane. It carries out the reaction a quinone + NADH + 5 H(+)(in) = a quinol + NAD(+) + 4 H(+)(out). NDH-1 shuttles electrons from NADH, via FMN and iron-sulfur (Fe-S) centers, to quinones in the respiratory chain. The immediate electron acceptor for the enzyme in this species is believed to be ubiquinone. Couples the redox reaction to proton translocation (for every two electrons transferred, four hydrogen ions are translocated across the cytoplasmic membrane), and thus conserves the redox energy in a proton gradient. The chain is NADH-quinone oxidoreductase subunit C/D from Blochmanniella pennsylvanica (strain BPEN).